Reading from the N-terminus, the 220-residue chain is Metalloproteinase inhibitor 2 (220 aa).

Residues methionine 1–alanine 26 form the signal peptide. Cysteine 27 is a binding site for Zn(2+). Involved in metalloproteinase-binding stretches follow at residues cysteine 27 to serine 30 and serine 95 to alanine 96. Intrachain disulfides connect cysteine 27/cysteine 98, cysteine 29/cysteine 127, cysteine 39/cysteine 152, cysteine 154/cysteine 201, cysteine 159/cysteine 164, and cysteine 172/cysteine 193. An NTR domain is found at cysteine 27–cysteine 152.

Belongs to the protease inhibitor I35 (TIMP) family. As to quaternary structure, interacts (via the C-terminal) with MMP2 (via the C-terminal PEX domain); the interaction inhibits the MMP2 activity. In terms of processing, the activity of TIMP2 is dependent on the presence of disulfide bonds.

Its subcellular location is the secreted. Its function is as follows. Complexes with metalloproteinases (such as collagenases) and irreversibly inactivates them by binding to their catalytic zinc cofactor. The polypeptide is Metalloproteinase inhibitor 2 (Timp2) (Rattus norvegicus (Rat)).